Here is a 271-residue protein sequence, read N- to C-terminus: Short-chain dehydrogenase PC-15 (271 aa).

Residues isoleucine 8, threonine 34, lysine 40, aspartate 56, asparagine 84, tyrosine 148, lysine 152, valine 181, and threonine 183 each contribute to the NADP(+) site. Tyrosine 148 (proton acceptor) is an active-site residue. Lysine 152 serves as the catalytic Lowers pKa of active site Tyr.

It belongs to the short-chain dehydrogenases/reductases (SDR) family.

It participates in secondary metabolite biosynthesis. Its function is as follows. Short-chain dehydrogenase; part of the gene cluster that mediates the biosynthesis of the indole diterpenes penitrems. The geranylgeranyl diphosphate (GGPP) synthase penG catalyzes the first step in penitrem biosynthesis via conversion of farnesyl pyrophosphate and isopentyl pyrophosphate into geranylgeranyl pyrophosphate (GGPP). Condensation of indole-3-glycerol phosphate with GGPP by the prenyl transferase penC then forms 3-geranylgeranylindole (3-GGI). Epoxidation by the FAD-dependent monooxygenase penM leads to a epoxidized-GGI that is substrate of the terpene cyclase penB for cyclization to yield paspaline. Paspaline is subsequently converted to 13-desoxypaxilline by the cytochrome P450 monooxygenase penP, the latter being then converted to paxilline by the cytochrome P450 monooxygenase penQ. Paxilline is converted to beta-paxitriol via C-10 ketoreduction by the short-chain dehydrogenase PC-15 which can be monoprenylated at the C-20 by the indole diterpene prenyltransferase penD. A two-step elimination (acetylation and elimination) process performed by the O-acetyltransferase PC-16 and the P.simplicissimum ptmI-ortholog not yet identified in P.crustosum, leads to the production of the prenylated form of penijanthine. The FAD-linked oxidoreductase ptmO then converts the prenylated form of penijanthine into PC-M5 which is in turn transformed into PC-M4 by the aromatic dimethylallyltransferase PC-22. A series of oxidation steps involving 4 cytochrome P450 monooxygenases (PC-21, PC-05, PC-23, PC-20) and a FAD-dependent monooxygenase (PC-14) are required for the transformation of PC-M4 to penitrems A and E. Synthesis of these final products is proposed to proceed via penitrems D and C (PC-21, PC-05, PC-14) and penitrems B and F (PC-21, PC-05, PC-14, PC-23). This is Short-chain dehydrogenase PC-15 from Penicillium crustosum (Blue mold fungus).